Here is a 502-residue protein sequence, read N- to C-terminus: Lysine--tRNA ligase (502 aa).

Residues E412 and E419 each contribute to the Mg(2+) site.

It belongs to the class-II aminoacyl-tRNA synthetase family. In terms of assembly, homodimer. Mg(2+) serves as cofactor.

The protein localises to the cytoplasm. It catalyses the reaction tRNA(Lys) + L-lysine + ATP = L-lysyl-tRNA(Lys) + AMP + diphosphate. The polypeptide is Lysine--tRNA ligase (Buchnera aphidicola subsp. Cinara cedri (strain Cc)).